Consider the following 120-residue polypeptide: Accessory gland protein Acp53Ea (120 aa).

A signal peptide spans 1–23; the sequence is MKLIKVTLVFSLLALVFVAQTEA.

In terms of tissue distribution, main cells of accessory gland and seminal fluid.

It localises to the secreted. Its function is as follows. Responsible for physiological and behavioral changes in mated female flies. This is Accessory gland protein Acp53Ea (Acp53Ea) from Drosophila melanogaster (Fruit fly).